Consider the following 47-residue polypeptide: Rhodotorucin-A peptides type 3 (47 aa).

A propeptide spanning residues 1 to 3 (MVA) is cleaved from the precursor. Cys14 carries S-farnesyl cysteine lipidation. Positions 15–18 (TVAK) are excised as a propeptide. Cys29 is lipidated: S-farnesyl cysteine. The propeptide occupies 30 to 33 (TVSK). A lipid anchor (S-farnesyl cysteine) is attached at Cys44. The propeptide occupies 45 to 47 (TVA).

Its subcellular location is the cell membrane. Its function is as follows. Rhodotorucin-A is a mating pheromone in cells of mating type A of Rhodosporidium toruloides. The protein is Rhodotorucin-A peptides type 3 (RHA3) of Rhodotorula toruloides (Yeast).